Here is a 478-residue protein sequence, read N- to C-terminus: Transposase for insertion sequence element IS231B (478 aa).

This sequence belongs to the transposase 11 family.

Functionally, involved in the transposition of the insertion sequence. In Bacillus thuringiensis subsp. berliner, this protein is Transposase for insertion sequence element IS231B.